Here is a 209-residue protein sequence, read N- to C-terminus: Uracil phosphoribosyltransferase (209 aa).

Residues R79, R104, and 131 to 139 each bind 5-phospho-alpha-D-ribose 1-diphosphate; that span reads DPMLATGGS. Residues I194 and 199-201 each bind uracil; that span reads GDA. A 5-phospho-alpha-D-ribose 1-diphosphate-binding site is contributed by D200.

The protein belongs to the UPRTase family. Mg(2+) is required as a cofactor.

The enzyme catalyses UMP + diphosphate = 5-phospho-alpha-D-ribose 1-diphosphate + uracil. It participates in pyrimidine metabolism; UMP biosynthesis via salvage pathway; UMP from uracil: step 1/1. Its activity is regulated as follows. Allosterically activated by GTP. Catalyzes the conversion of uracil and 5-phospho-alpha-D-ribose 1-diphosphate (PRPP) to UMP and diphosphate. The protein is Uracil phosphoribosyltransferase of Finegoldia magna (strain ATCC 29328 / DSM 20472 / WAL 2508) (Peptostreptococcus magnus).